A 222-amino-acid chain; its full sequence is MNVAILLAAGKGERLGEKVPKQFLEVEGRMLFEYPLKALLDSNVIDAVVIVVSRDWMDRVVEKVKHEKILGIVEGGKTRSQSVRNALKFLENIKPSYVLVHDAARPFLRKKHIEEVLKKAQETGAATLALKNSDTLIRLDDSRIEYVPREGIYRVQTPQAFSYDLLKRAHSEEKEWADDTEPVHRLGVKISVVEGDLFCFKVTFKSDLELARLIAKEWERIA.

It belongs to the IspD/TarI cytidylyltransferase family. IspD subfamily.

It carries out the reaction 2-C-methyl-D-erythritol 4-phosphate + CTP + H(+) = 4-CDP-2-C-methyl-D-erythritol + diphosphate. It participates in isoprenoid biosynthesis; isopentenyl diphosphate biosynthesis via DXP pathway; isopentenyl diphosphate from 1-deoxy-D-xylulose 5-phosphate: step 2/6. Its function is as follows. Catalyzes the formation of 4-diphosphocytidyl-2-C-methyl-D-erythritol from CTP and 2-C-methyl-D-erythritol 4-phosphate (MEP). The protein is 2-C-methyl-D-erythritol 4-phosphate cytidylyltransferase of Thermotoga neapolitana (strain ATCC 49049 / DSM 4359 / NBRC 107923 / NS-E).